A 326-amino-acid chain; its full sequence is GMP reductase (326 aa).

C175 (thioimidate intermediate) is an active-site residue. 204-227 provides a ligand contact to NADP(+); that stretch reads IIADGGIRTHGDIAKSIRFGATMV.

Belongs to the IMPDH/GMPR family. GuaC type 2 subfamily.

The enzyme catalyses IMP + NH4(+) + NADP(+) = GMP + NADPH + 2 H(+). Its function is as follows. Catalyzes the irreversible NADPH-dependent deamination of GMP to IMP. It functions in the conversion of nucleobase, nucleoside and nucleotide derivatives of G to A nucleotides, and in maintaining the intracellular balance of A and G nucleotides. The chain is GMP reductase (guaC) from Bacillus subtilis (strain 168).